The following is a 382-amino-acid chain: Dodecanoyl-[acyl-carrier-protein] hydrolase, chloroplastic (382 aa).

Residues 1 to 83 (MATTSLASAF…FSAAEKQWTN (83 aa)) constitute a chloroplast transit peptide. Catalysis depends on residues asparagine 283, histidine 285, and cysteine 320.

This sequence belongs to the acyl-ACP thioesterase family. As to quaternary structure, forms homodimers. In terms of tissue distribution, expressed in developing cotyledons. Not detected in leaves.

The protein resides in the plastid. It localises to the chloroplast. It carries out the reaction dodecanoyl-[ACP] + H2O = dodecanoate + holo-[ACP] + H(+). Plays an essential role in chain termination during de novo fatty acid synthesis. High thioesterase activity for lauroyl-ACP versus other acyl-ACPs. The protein is Dodecanoyl-[acyl-carrier-protein] hydrolase, chloroplastic of Umbellularia californica (California bay laurel).